Here is a 263-residue protein sequence, read N- to C-terminus: SPRY domain-containing SOCS box protein 2 (263 aa).

Positions Met-1 to Pro-16 are enriched in polar residues. Residues Met-1–Trp-48 are disordered. One can recognise a B30.2/SPRY domain in the interval Pro-26–Arg-221. In terms of domain architecture, SOCS box spans Ala-222–Gln-263.

This sequence belongs to the SPSB family. In terms of assembly, component of the probable ECS(SPSB2) E3 ubiquitin-protein ligase complex which contains CUL5, RNF7/RBX2, Elongin BC complex and SPSB2. Interacts with CUL5, RNF7, ELOB and ELOC. Interacts with MET. Interacts (via B30.2/SPRY domain) with PAWR; this interaction occurs in association with the Elongin BC complex. Interacts with NOS2. (Microbial infection) Interacts (via C-terminus) with HCV envelope glycoprotein E1. Interacts (via C-terminus) with HCV non-structural protein 5A; this interaction targets NS5A for ubiquitination and degradation.

Its subcellular location is the cytoplasm. The protein localises to the cytosol. It participates in protein modification; protein ubiquitination. Functionally, substrate recognition component of a SCF-like ECS (Elongin BC-CUL2/5-SOCS-box protein) E3 ubiquitin-protein ligase complex which mediates the ubiquitination and subsequent proteasomal degradation of target proteins. Negatively regulates nitric oxide (NO) production and limits cellular toxicity in activated macrophages by mediating the ubiquitination and proteasomal degradation of NOS2. Acts as a bridge which links NOS2 with the ECS E3 ubiquitin ligase complex components ELOC and CUL5. The protein is SPRY domain-containing SOCS box protein 2 (SPSB2) of Homo sapiens (Human).